The following is a 349-amino-acid chain: Isopentenyl-diphosphate delta-isomerase (349 aa).

6 to 7 (RK) is a substrate binding site. FMN-binding positions include 62–64 (AMT), serine 93, and asparagine 122. Residue glutamine 152 coordinates substrate. Glutamate 153 contributes to the Mg(2+) binding site. Residues lysine 184, threonine 214, 258–259 (GG), and 280–281 (AG) contribute to the FMN site.

This sequence belongs to the IPP isomerase type 2 family. Homooctamer. Dimer of tetramers. The cofactor is FMN. NADPH serves as cofactor. Mg(2+) is required as a cofactor.

It localises to the cytoplasm. It catalyses the reaction isopentenyl diphosphate = dimethylallyl diphosphate. Functionally, involved in the biosynthesis of isoprenoids. Catalyzes the 1,3-allylic rearrangement of the homoallylic substrate isopentenyl (IPP) to its allylic isomer, dimethylallyl diphosphate (DMAPP). The protein is Isopentenyl-diphosphate delta-isomerase of Bacillus cereus (strain ZK / E33L).